A 593-amino-acid polypeptide reads, in one-letter code: Probable 5'-nucleotidase (593 aa).

The first 21 residues, 1–21 (MKRFIPHRVIHAVCIGLALVG), serve as a signal peptide directing secretion. Cys-22 is lipidated: N-palmitoyl cysteine. Cys-22 is lipidated: S-diacylglycerol cysteine. Positions 41, 43, 91, 123, and 224 each coordinate a divalent metal cation. Substrate contacts are provided by residues Phe-456 and 539–545 (YIARGKD).

The protein belongs to the 5'-nucleotidase family. It depends on a divalent metal cation as a cofactor.

The protein localises to the cell membrane. The enzyme catalyses a ribonucleoside 5'-phosphate + H2O = a ribonucleoside + phosphate. This chain is Probable 5'-nucleotidase, found in Treponema pallidum (strain Nichols).